We begin with the raw amino-acid sequence, 940 residues long: Acetyl-coenzyme A synthetase (940 aa).

The N-terminal stretch at 1–33 is a signal peptide; sequence MCCAIWSASRAPACSASQLSSSHAVRPSVVPDA. Residues 1–289 are unknown; the sequence is MCCAIWSASR…VQRSVTRLTA (289 aa). Disordered regions lie at residues 70-127, 157-202, and 224-274; these read TARA…RPRC, VAPP…ADSA, and ASSQ…QQTC. Polar residues-rich tracts occupy residues 72-95 and 107-120; these read RATT…TAAS and SSIS…TSGS. 2 stretches are compositionally biased toward low complexity: residues 184–202 and 224–245; these read TAPP…ADSA and ASSQ…SGRS. Residues 258–274 show a composition bias toward polar residues; that stretch reads SSPTVQRNQTTVHQQTC. The interval 290 to 940 is acetyl-coenzyme A synthetase; that stretch reads MSNPSHAEVP…SVFEAIRASK (651 aa). CoA-binding positions include 480-483 and threonine 599; that span reads RRGK. Residues 675-677, 699-704, aspartate 796, and arginine 811 each bind ATP; these read GEP and DTWWQT. Serine 819 provides a ligand contact to CoA. Arginine 822 provides a ligand contact to ATP. 3 residues coordinate Mg(2+): valine 833, histidine 835, and valine 838. Lysine 906 bears the N6-acetyllysine mark.

This sequence belongs to the ATP-dependent AMP-binding enzyme family. Requires Mg(2+) as cofactor. Acetylated on Lys-906 by Pat in the presence of acetyl-CoA as an acetyl donor and ATP. Acetylation results in the inactivation of the enzyme. Deacetylation by the SIR2-homolog deacetylase CobB is required to activate the enzyme.

It carries out the reaction acetate + ATP + CoA = acetyl-CoA + AMP + diphosphate. In terms of biological role, catalyzes the conversion of acetate into acetyl-CoA (AcCoA), an essential intermediate at the junction of anabolic and catabolic pathways. AcsA undergoes a two-step reaction. In the first half reaction, AcsA combines acetate with ATP to form acetyl-adenylate (AcAMP) intermediate. In the second half reaction, it can then transfer the acetyl group from AcAMP to the sulfhydryl group of CoA, forming the product AcCoA. This Mycolicibacterium smegmatis (strain ATCC 700084 / mc(2)155) (Mycobacterium smegmatis) protein is Acetyl-coenzyme A synthetase (acsA).